Here is a 298-residue protein sequence, read N- to C-terminus: Nucleotide-binding protein GTNG_3015 (298 aa).

G17 to T24 is an ATP binding site. Position 68 to 71 (D68 to S71) interacts with GTP.

Belongs to the RapZ-like family.

Its function is as follows. Displays ATPase and GTPase activities. The sequence is that of Nucleotide-binding protein GTNG_3015 from Geobacillus thermodenitrificans (strain NG80-2).